We begin with the raw amino-acid sequence, 275 residues long: Large ribosomal subunit protein uL2c (275 aa).

Residues 225–256 are disordered; it reads AMNAVDHPHGGGEGRSPIGRSQPSTPWGRPAL.

It belongs to the universal ribosomal protein uL2 family. As to quaternary structure, part of the 50S ribosomal subunit.

It is found in the plastid. The protein localises to the chloroplast. The protein is Large ribosomal subunit protein uL2c (rpl2) of Cyanidium caldarium (Red alga).